We begin with the raw amino-acid sequence, 384 residues long: Ferrochelatase, mitochondrial (384 aa).

[2Fe-2S] cluster is bound at residue Cys-156. Catalysis depends on residues His-190 and Asn-343. Residues Cys-363, Cys-366, and Cys-371 each coordinate [2Fe-2S] cluster.

The protein belongs to the ferrochelatase family. As to quaternary structure, homodimer. Homotetramer. The cofactor is [2Fe-2S] cluster.

Its subcellular location is the mitochondrion inner membrane. The enzyme catalyses heme b + 2 H(+) = protoporphyrin IX + Fe(2+). It functions in the pathway porphyrin-containing compound metabolism; protoheme biosynthesis; protoheme from protoporphyrin-IX: step 1/1. In terms of biological role, catalyzes the ferrous insertion into protoporphyrin IX. Terminal enzyme in heme biosynthesis. Contains four conserved cysteines that function as cluster ligands and play a crucial role in maintaining protein structure. This Drosophila melanogaster (Fruit fly) protein is Ferrochelatase, mitochondrial.